The primary structure comprises 349 residues: tRNA pseudouridine synthase D (349 aa).

Residue F26 coordinates substrate. D79 functions as the Nucleophile in the catalytic mechanism. N128 is a substrate binding site. The 149-residue stretch at 154–302 folds into the TRUD domain; the sequence is GVPNYFGSQR…VEGSRRAVLL (149 aa). F328 lines the substrate pocket.

Belongs to the pseudouridine synthase TruD family.

The catalysed reaction is uridine(13) in tRNA = pseudouridine(13) in tRNA. Responsible for synthesis of pseudouridine from uracil-13 in transfer RNAs. This Yersinia pseudotuberculosis serotype IB (strain PB1/+) protein is tRNA pseudouridine synthase D.